Consider the following 324-residue polypeptide: Kelch domain-containing protein AF_2170 (324 aa).

Kelch repeat units follow at residues 229-276 (YIFA…VGGE) and 277-323 (YIYI…NNGK).

The chain is Kelch domain-containing protein AF_2170 from Archaeoglobus fulgidus (strain ATCC 49558 / DSM 4304 / JCM 9628 / NBRC 100126 / VC-16).